Reading from the N-terminus, the 311-residue chain is Olfactory receptor 52J3 (311 aa).

The Extracellular portion of the chain corresponds to 1-27; that stretch reads MFYHNKSIFHPVTFFLIGIPGLEDFHM. Asn5 is a glycosylation site (N-linked (GlcNAc...) asparagine). A helical transmembrane segment spans residues 28–48; that stretch reads WISGPFCSVYLVALLGNATIL. Over 49–56 the chain is Cytoplasmic; sequence LVIKVEQT. Residues 57 to 77 traverse the membrane as a helical segment; it reads LREPMFYFLAILSTIDLALST. The Extracellular segment spans residues 78 to 101; the sequence is TSVPRMLGIFWFDAHEINYGACVA. Cys99 and Cys191 form a disulfide bridge. Residues 102 to 122 form a helical membrane-spanning segment; that stretch reads QMFLIHAFTGMEAEVLLAMAF. Over 123–141 the chain is Cytoplasmic; sequence DRYVAVCAPLHYATILTSQ. Residues 142–162 form a helical membrane-spanning segment; it reads VLVGISMCIVIRPVLLTLPMV. Topologically, residues 163–198 are extracellular; it reads YLIYRLPFCQAHIIAHSYCEHMGIAKLSCGNIRING. Residues 199–218 traverse the membrane as a helical segment; that stretch reads IYGLFVVSFFVLNLVLIGIS. The Cytoplasmic portion of the chain corresponds to 219–238; sequence YVYILRAVFRLPSHDAQLKA. Residues 239–259 form a helical membrane-spanning segment; that stretch reads LSTCGAHVGVICVFYIPSVFS. Residues 260–274 lie on the Extracellular side of the membrane; it reads FLTHRFGHQIPGYIH. Residues 275-295 form a helical membrane-spanning segment; that stretch reads ILVANLYLIIPPSLNPIIYGV. Residues 296 to 311 are Cytoplasmic-facing; sequence RTKQIRERVLYVFTKK.

This sequence belongs to the G-protein coupled receptor 1 family.

The protein localises to the cell membrane. Its function is as follows. Odorant receptor. The chain is Olfactory receptor 52J3 (OR52J3) from Homo sapiens (Human).